The following is a 274-amino-acid chain: Aliphatic sulfonates import ATP-binding protein SsuB 2 (274 aa).

The region spanning 21–242 is the ABC transporter domain; it reads LALRGVARRF…SRGSARLAAL (222 aa). 53–60 is an ATP binding site; the sequence is GRSGCGKS.

This sequence belongs to the ABC transporter superfamily. Aliphatic sulfonates importer (TC 3.A.1.17.2) family. In terms of assembly, the complex is composed of two ATP-binding proteins (SsuB), two transmembrane proteins (SsuC) and a solute-binding protein (SsuA).

It is found in the cell inner membrane. It carries out the reaction ATP + H2O + aliphatic sulfonate-[sulfonate-binding protein]Side 1 = ADP + phosphate + aliphatic sulfonateSide 2 + [sulfonate-binding protein]Side 1.. Functionally, part of the ABC transporter complex SsuABC involved in aliphatic sulfonates import. Responsible for energy coupling to the transport system. In Pseudomonas aeruginosa (strain UCBPP-PA14), this protein is Aliphatic sulfonates import ATP-binding protein SsuB 2.